Reading from the N-terminus, the 659-residue chain is Enzymatic polyprotein (659 aa).

Residues 1–180 (MSLRNRTNPN…FLEEGGNHVD (180 aa)) form a protease region. Aspartate 34 is an active-site residue. In terms of domain architecture, Reverse transcriptase spans 252 to 436 (LELKVIKPSK…EKINFLGLEI (185 aa)).

It belongs to the caulimoviridae enzymatic polyprotein family.

The enzyme catalyses DNA(n) + a 2'-deoxyribonucleoside 5'-triphosphate = DNA(n+1) + diphosphate. Its function is as follows. Encodes for at least two polypeptides: protease (PR) and reverse transcriptase (RT). The protease processes the polyprotein in cis. Reverse transcriptase is multifunctional enzyme that converts the viral RNA genome into dsDNA in viral cytoplasmic capsids. This enzyme displays a DNA polymerase activity that can copy either DNA or RNA templates, and a ribonuclease H (RNase H) activity that cleaves the RNA strand of RNA-DNA heteroduplexes in a partially processive 3'- to 5'-endonucleasic mode. Neo-synthesized pregenomic RNA (pgRNA) are encapsidated, and reverse-transcribed inside the nucleocapsid. Partial (+)DNA is synthesized from the (-)DNA template and generates the relaxed circular DNA (RC-DNA) genome. After budding and infection, the RC-DNA migrates in the nucleus, and is converted into a plasmid-like covalently closed circular DNA (cccDNA). In Dianthus caryophyllus (Carnation), this protein is Enzymatic polyprotein.